A 31-amino-acid chain; its full sequence is Photosystem II reaction center protein Psb30 (31 aa).

The helical transmembrane segment at 5–25 (IQLTSLLLIVIAGPLVIALLF) threads the bilayer.

It belongs to the Psb30/Ycf12 family. In terms of assembly, PSII is composed of 1 copy each of membrane proteins PsbA, PsbB, PsbC, PsbD, PsbE, PsbF, PsbH, PsbI, PsbJ, PsbK, PsbL, PsbM, PsbT, PsbX, PsbY, PsbZ, Psb30/Ycf12, peripheral proteins of the oxygen-evolving complex and a large number of cofactors. It forms dimeric complexes.

Its subcellular location is the plastid. It is found in the chloroplast thylakoid membrane. A core subunit of photosystem II (PSII), probably helps stabilize the reaction center. The chain is Photosystem II reaction center protein Psb30 from Phacus acuminatus.